The sequence spans 339 residues: 2-halobenzoate 1,2-dioxygenase electron transfer component (339 aa).

A 2Fe-2S ferredoxin-type domain is found at 3-96 (HSIALRFEDD…DCVVRILASS (94 aa)). The [2Fe-2S] cluster site is built by Cys-40, Cys-45, Cys-48, and Cys-80. A ferredoxin-reductase region spans residues 98 to 336 (ACQVKKSTMT…NFYFEKFAPT (239 aa)). In terms of domain architecture, FAD-binding FR-type spans 103–203 (KSTMTGQMTE…DGPYGAFYLR (101 aa)).

It belongs to the bacterial ring-hydroxylating dioxygenase ferredoxin reductase family. Monomer. It is part of 2-halobenzoate dioxygenase two component enzyme system. The other component is a dioxygenase component consisting of 3 large (CbdA) subunits and 3 small (CbdB) subunits. It depends on FAD as a cofactor. [2Fe-2S] cluster serves as cofactor.

The catalysed reaction is 2 reduced [2Fe-2S]-[ferredoxin] + NAD(+) + H(+) = 2 oxidized [2Fe-2S]-[ferredoxin] + NADH. It participates in xenobiotic degradation; benzoate degradation via CoA ligation. Electron transfer component of 2-halobenzoate 1,2-dioxygenase system. The chain is 2-halobenzoate 1,2-dioxygenase electron transfer component (cbdC) from Burkholderia cepacia (Pseudomonas cepacia).